The primary structure comprises 523 residues: Type 2 DNA topoisomerase 6 subunit B (523 aa).

Residues Asn48, Asp80, 101–102 (SK), 110–117 (GQQGLGCS), and Lys436 contribute to the ATP site.

This sequence belongs to the TOP6B family. In terms of assembly, homodimer. Heterotetramer of two Top6A and two Top6B chains.

The enzyme catalyses ATP-dependent breakage, passage and rejoining of double-stranded DNA.. Relaxes both positive and negative superturns and exhibits a strong decatenase activity. The chain is Type 2 DNA topoisomerase 6 subunit B from Methanothermobacter thermautotrophicus (strain ATCC 29096 / DSM 1053 / JCM 10044 / NBRC 100330 / Delta H) (Methanobacterium thermoautotrophicum).